Reading from the N-terminus, the 359-residue chain is MTLESMMACCLSDEVKESKRINAEIEKQLRRDKRDARRELKLLLLGTGESGKSTFIKQMRIIHGAGYSEEDKRGFTKLVYQNIFTAMQAMIRAMETLKILYKYEQNKANALLIREVDVEKVTTFEHRYVSAIKTLWNDPGIQECYDRRREYQLSDSAKYYLTDVDRIATSGYLPTQQDVLRVRVPTTGIIEYPFDLENIIFRMVDVGGQRSERRKWIHCFENVTSIMFLVALSEYDQVLVESDNENRMEESKALFRTIVTYPWFQNSSVILFLNKKDLLEDKILFSHLVDYFPEFDGPQRVAQAAREFILKMFVDLNPDSDKIIYSHFTCATDTENIRFVFAAVKDTILQLNLKEYNLV.

S-palmitoyl cysteine attachment occurs at residues Cys9 and Cys10. The 322-residue stretch at 38-359 (RELKLLLLGT…QLNLKEYNLV (322 aa)) folds into the G-alpha domain. The segment at 41 to 54 (KLLLLGTGESGKST) is G1 motif. Residues 46 to 53 (GTGESGKS) and 180 to 183 (LRVR) contribute to the GTP site. Ser53 is a Mg(2+) binding site. The G2 motif stretch occupies residues 178-186 (DVLRVRVPT). Thr186 lines the Mg(2+) pocket. The interval 201 to 210 (FRMVDVGGQR) is G3 motif. Residues 270-277 (ILFLNKKD) form a G4 motif region. Residues 274-277 (NKKD) and Ala331 contribute to the GTP site. The G5 motif stretch occupies residues 329–334 (TCATDT).

The protein belongs to the G-alpha family. G(q) subfamily. G proteins are composed of 3 units; alpha, beta and gamma. The alpha chain contains the guanine nucleotide binding site. Interacts with RGS22. Interacts with NTSR1.

It is found in the cell membrane. The protein resides in the cytoplasm. It catalyses the reaction GTP + H2O = GDP + phosphate + H(+). Functionally, guanine nucleotide-binding proteins (G proteins) function as transducers downstream of G protein-coupled receptors (GPCRs) in numerous signaling cascades. The alpha chain contains the guanine nucleotide binding site and alternates between an active, GTP-bound state and an inactive, GDP-bound state. Signaling by an activated GPCR promotes GDP release and GTP binding. The alpha subunit has a low GTPase activity that converts bound GTP to GDP, thereby terminating the signal. Both GDP release and GTP hydrolysis are modulated by numerous regulatory proteins. Signaling is mediated via phospholipase C-beta-dependent inositol lipid hydrolysis for signal propagation: activates phospholipase C-beta: following GPCR activation, GNA11 activates PLC-beta (PLCB1, PLCB2, PLCB3 or PLCB4), leading to production of diacylglycerol (DAG) and inositol 1,4,5-trisphosphate (IP3). Transduces FFAR4 signaling in response to long-chain fatty acids (LCFAs). Together with GNAQ, required for heart development. In the respiratory epithelium, transmits OXGR1-dependent signals that lead to downstream intracellular Ca(2+) release and mucocilliary clearance of airborne pathogens. The polypeptide is Guanine nucleotide-binding protein subunit alpha-11 (GNA11) (Sus scrofa (Pig)).